The sequence spans 127 residues: Arginine decarboxylase proenzyme (127 aa).

Residue Ser72 is the Schiff-base intermediate with substrate; via pyruvic acid of the active site. Ser72 is modified (pyruvic acid (Ser); by autocatalysis). The active-site Proton acceptor; for processing activity is His77. Cys92 functions as the Proton donor; for catalytic activity in the catalytic mechanism.

The protein belongs to the prokaryotic AdoMetDC family. Type 1 subfamily. In terms of assembly, heterooctamer of four alpha and four beta chains arranged as a tetramer of alpha/beta heterodimers. Requires pyruvate as cofactor. Post-translationally, is synthesized initially as an inactive proenzyme. Formation of the active enzyme involves a self-maturation process in which the active site pyruvoyl group is generated from an internal serine residue via an autocatalytic post-translational modification. Two non-identical subunits are generated from the proenzyme in this reaction, and the pyruvate is formed at the N-terminus of the alpha chain, which is derived from the carboxyl end of the proenzyme. The post-translation cleavage follows an unusual pathway, termed non-hydrolytic serinolysis, in which the side chain hydroxyl group of the serine supplies its oxygen atom to form the C-terminus of the beta chain, while the remainder of the serine residue undergoes an oxidative deamination to produce ammonia and the pyruvoyl group blocking the N-terminus of the alpha chain.

It carries out the reaction L-arginine + H(+) = agmatine + CO2. It functions in the pathway amine and polyamine biosynthesis; agmatine biosynthesis; agmatine from L-arginine: step 1/1. Specifically catalyzes the decarboxylation of L-arginine to agmatine. Has no S-adenosylmethionine decarboxylase (AdoMetDC) activity. In Staphylothermus marinus (strain ATCC 43588 / DSM 3639 / JCM 9404 / F1), this protein is Arginine decarboxylase proenzyme.